The following is a 520-amino-acid chain: tRNA (guanine-N(7)-)-methyltransferase non-catalytic subunit TRM82 (520 aa).

Residues 51 to 102 (PLDSEISPDRASSAGTCAEPPEKRRKLTPPVDESGEAQTEQSAKAKARKSQT) form a disordered region. WD repeat units follow at residues 105–145 (QAWS…KLTQ), 244–291 (GHVS…HIIH), and 296–338 (GHTS…QTIP).

The protein belongs to the WD repeat TRM82 family. Forms a heterodimer with the catalytic subunit TRM8.

It is found in the nucleus. It participates in tRNA modification; N(7)-methylguanine-tRNA biosynthesis. Required for the formation of N(7)-methylguanine at position 46 (m7G46) in tRNA. In the complex, it is required to stabilize and induce conformational changes of the catalytic subunit. This is tRNA (guanine-N(7)-)-methyltransferase non-catalytic subunit TRM82 from Coccidioides immitis (strain RS) (Valley fever fungus).